A 443-amino-acid chain; its full sequence is Na(+)-translocating NADH-quinone reductase subunit A (443 aa).

This sequence belongs to the NqrA family. As to quaternary structure, composed of six subunits; NqrA, NqrB, NqrC, NqrD, NqrE and NqrF.

It carries out the reaction a ubiquinone + n Na(+)(in) + NADH + H(+) = a ubiquinol + n Na(+)(out) + NAD(+). NQR complex catalyzes the reduction of ubiquinone-1 to ubiquinol by two successive reactions, coupled with the transport of Na(+) ions from the cytoplasm to the periplasm. NqrA to NqrE are probably involved in the second step, the conversion of ubisemiquinone to ubiquinol. The sequence is that of Na(+)-translocating NADH-quinone reductase subunit A from Actinobacillus succinogenes (strain ATCC 55618 / DSM 22257 / CCUG 43843 / 130Z).